Consider the following 278-residue polypeptide: HTH-type transcriptional regulator HdfR (278 aa).

The HTH lysR-type domain occupies 1 to 58; the sequence is MDTELLKTFLEVSRTRHFGRAAEALYLTQSAVSFRIRQLENQLGVNLFTRHRNNIRLT. Positions 18 to 37 form a DNA-binding region, H-T-H motif; the sequence is FGRAAEALYLTQSAVSFRIR.

It belongs to the LysR transcriptional regulatory family.

In terms of biological role, negatively regulates the transcription of the flagellar master operon flhDC by binding to the upstream region of the operon. The protein is HTH-type transcriptional regulator HdfR of Salmonella schwarzengrund (strain CVM19633).